We begin with the raw amino-acid sequence, 143 residues long: Photosystem I reaction center subunit IV B, chloroplastic (143 aa).

The transit peptide at 1-51 (MASSSMASAASGFMVATPNIATSNTAPRTSMLFFSSSKNNTTTNFPRLVVR) directs the protein to the chloroplast. The segment covering 56 to 75 (AAPPAATATAEGEAPPAKAA) has biased composition (low complexity). The segment at 56–86 (AAPPAATATAEGEAPPAKAAKPPPIGPKRGT) is disordered.

Belongs to the PsaE family. 2 isoforms exists (ratio 1:1). With or without the N-terminal alanine.

The protein resides in the plastid. Its subcellular location is the chloroplast thylakoid membrane. Its function is as follows. Stabilizes the interaction between PsaC and the PSI core, assists the docking of the ferredoxin to PSI and interacts with ferredoxin-NADP oxidoreductase. The sequence is that of Photosystem I reaction center subunit IV B, chloroplastic (PSAEB) from Nicotiana sylvestris (Wood tobacco).